The following is a 413-amino-acid chain: MSELIVKAKKLKQAASQLAMLSTEEKNNALAMIAEALIAQTGYILQENEKDMEIGKENGLSPSLLDRLQLTEERVQQIADGVRQVVDLPDPIGETIEQWTRPNGLILKQIRVPLGVVGMVYEARPNVTVDAASLCLKTGNAVLLRGSSSAIHSNKALISVMQQALKQSKIPTDAIQLLEDTSRETAQQMFRLKEYIDVLIPRGGAGLIQSVVENATIPVLETGVGNCHIFIDDSAQKEMAIDIVINAKLQRPSVCNAVETVIVHKQWPYIKELLETLHEKGVELRADKQLADTYPFVHEAKEEDWATEFLAPILAVKLVETVDEAIEHIERYGTKHSEAIISECNEHVEQFFARVDAAVLYHNASTRFTDGEQFGYGAEIGISTQKLHARGPMGLRAITTTKTLVYGSGQVRK.

This sequence belongs to the gamma-glutamyl phosphate reductase family.

The protein localises to the cytoplasm. It carries out the reaction L-glutamate 5-semialdehyde + phosphate + NADP(+) = L-glutamyl 5-phosphate + NADPH + H(+). The protein operates within amino-acid biosynthesis; L-proline biosynthesis; L-glutamate 5-semialdehyde from L-glutamate: step 2/2. Its function is as follows. Catalyzes the NADPH-dependent reduction of L-glutamate 5-phosphate into L-glutamate 5-semialdehyde and phosphate. The product spontaneously undergoes cyclization to form 1-pyrroline-5-carboxylate. This chain is Gamma-glutamyl phosphate reductase, found in Anoxybacillus flavithermus (strain DSM 21510 / WK1).